The sequence spans 1048 residues: MDGAVRGQGCVGRLRSFNKTKKKNRNCSDDMRNGDDEEKKYSHHDMKNNLRNDANEEKRKSSDDMRDGDFEEKKKCSRHDMKKNLRNDANEEKRKSSDDMRDGDDEEKKCSRQDMKKNLRNDADEEKRKSSDDMRDGDDEEKKKRSRHDMKKNSRNDADEEKRKRKRKCSDDLKKSVVNDASKEATSHSDWRKNRKAGSDAEQRGKKLLNGDKKAKSRKVTTPFFEKMRKIKMQRTSNQNGEKNMKSDGDSYKKTVPLSVNKGKMEKDGTNKRTLSNTLVAKERKMRPSDSMEMKMKKKKRDASFVQPDERTAQTFSTKNKEKKRKAPSTPLKREQKERVASSDNKKETKKACIVAIGNEKKNCRDGKKKKRKAAFAFFKFVRDEFEELLFIPPAVAPSLKDLIDRHVYLEDSEGKCSKIRLSVVDGSLAFYEGWNSFVSEHCIKWGEFLLFEYTPESTFSVRVFGIDSCERLHFSVKSGGKGAVKKRKERHTLSDDLISHYNGQYQDSEDIHDGPNVSGESPRSKEPKITVDAEIGTRNLVAKSINAASETQDSERVESGIGYGSLGALGNKVRNLSNGECDTRSDSVFCIQEKTRRSEVIIISDEAYSTQVDEDTMKQTAPSEASEIHHVTINTQKDLERVVDGVCCESSVALNNKMGNLILGEPKNKNISPACSTEKTNGSEITPTTGVIPLTQENIDTVKLNTLSCFEEDRSTTRESELAAAIPTTSETHDSDKDLGQKHQRNSVQVNSIIAVDKYPNDSEMNISGNIFRIYEAPAGTRCLEKWKRGIVNGRAALDDIGQVRPEKTQKAGEKLVGNCGAMGESPVDLRIESDVTDTCLKPILNIPIEELSILDSVSISKCGRSRTEVNHLFNQKGATVQLQTKKEPLKPTGSSGNRKGDKIAVSVNRVFAHQSELQIPQQENGNFTSCVTPVALLPAKAELLDLDDHSLQFCIPSTIQKWLELPKSLPITCRQKGRYDRNVVILKDPMRRLWPVFYHDKPVFVGFTAGWKPFAAANNLQAGDVCKFVKEMDEDELAFQVYITRK.

The tract at residues 1–345 is disordered; the sequence is MDGAVRGQGC…QKERVASSDN (345 aa). A compositionally biased stretch (basic residues) spans 16 to 25; that stretch reads SFNKTKKKNR. 6 stretches are compositionally biased toward basic and acidic residues: residues 26-134, 151-162, 169-214, 243-253, 281-295, and 332-345; these read NCSD…SDDM, KKNSRNDADEEK, CSDD…GDKK, KNMKSDGDSYK, AKER…MEMK, and LKRE…SSDN. The segment at residues 375–468 is a DNA-binding region (TF-B3 1); sequence AFAFFKFVRD…TFSVRVFGID (94 aa). Residues 505–528 are disordered; sequence QYQDSEDIHDGPNVSGESPRSKEP. Positions 953 to 1048 form a DNA-binding region, TF-B3 2; it reads LQFCIPSTIQ…LAFQVYITRK (96 aa).

It localises to the nucleus. This is B3 domain-containing protein Os02g0598200 from Oryza sativa subsp. japonica (Rice).